We begin with the raw amino-acid sequence, 147 residues long: D-aminoacyl-tRNA deacylase (147 aa).

The Gly-cisPro motif, important for rejection of L-amino acids motif lies at 136–137 (GP).

It belongs to the DTD family. In terms of assembly, homodimer.

It is found in the cytoplasm. The enzyme catalyses glycyl-tRNA(Ala) + H2O = tRNA(Ala) + glycine + H(+). It catalyses the reaction a D-aminoacyl-tRNA + H2O = a tRNA + a D-alpha-amino acid + H(+). Its function is as follows. An aminoacyl-tRNA editing enzyme that deacylates mischarged D-aminoacyl-tRNAs. Also deacylates mischarged glycyl-tRNA(Ala), protecting cells against glycine mischarging by AlaRS. Acts via tRNA-based rather than protein-based catalysis; rejects L-amino acids rather than detecting D-amino acids in the active site. By recycling D-aminoacyl-tRNA to D-amino acids and free tRNA molecules, this enzyme counteracts the toxicity associated with the formation of D-aminoacyl-tRNA entities in vivo and helps enforce protein L-homochirality. The chain is D-aminoacyl-tRNA deacylase from Streptococcus agalactiae serotype III (strain NEM316).